The chain runs to 254 residues: Ribosomal RNA small subunit methyltransferase J (254 aa).

S-adenosyl-L-methionine contacts are provided by residues 106-107 (RD) and D177.

It belongs to the methyltransferase superfamily. RsmJ family.

The protein localises to the cytoplasm. It carries out the reaction guanosine(1516) in 16S rRNA + S-adenosyl-L-methionine = N(2)-methylguanosine(1516) in 16S rRNA + S-adenosyl-L-homocysteine + H(+). Functionally, specifically methylates the guanosine in position 1516 of 16S rRNA. The polypeptide is Ribosomal RNA small subunit methyltransferase J (Nitrosococcus oceani (strain ATCC 19707 / BCRC 17464 / JCM 30415 / NCIMB 11848 / C-107)).